A 342-amino-acid chain; its full sequence is Dihydroorotase (342 aa).

The Zn(2+) site is built by His13 and His15. Residues 15 to 17 (HLR) and Asn41 each bind substrate. The Zn(2+) site is built by Lys98, His135, and His173. The residue at position 98 (Lys98) is an N6-carboxylysine. Residue His135 participates in substrate binding. Leu218 lines the substrate pocket. Residue Asp246 coordinates Zn(2+). Asp246 is a catalytic residue. Substrate-binding residues include His250 and Ala262.

It belongs to the metallo-dependent hydrolases superfamily. DHOase family. Class II DHOase subfamily. In terms of assembly, homodimer. Zn(2+) serves as cofactor.

The catalysed reaction is (S)-dihydroorotate + H2O = N-carbamoyl-L-aspartate + H(+). It functions in the pathway pyrimidine metabolism; UMP biosynthesis via de novo pathway; (S)-dihydroorotate from bicarbonate: step 3/3. In terms of biological role, catalyzes the reversible cyclization of carbamoyl aspartate to dihydroorotate. This is Dihydroorotase from Photobacterium profundum (strain SS9).